Here is a 317-residue protein sequence, read N- to C-terminus: Egg-laying defective protein 26 (317 aa).

The LRAT domain maps to 156–277; sequence EVNVSGVKFY…CSTGVPFSYD (122 aa). Residues His166 and His178 contribute to the active site. Cys261 functions as the Acyl-thioester intermediate in the catalytic mechanism.

In terms of tissue distribution, highly expressed in the cells of the spermatheca, the mouth, and the lining of the pharynx, the rectum, and the excretory canal. Also expressed in the pharyngeal intestinal junction cell.

The protein resides in the apical cell membrane. In terms of biological role, putative acyltransferase. Plays a role in the morphogenesis of a vulval toroid cell, vulF, which is located where the vulva and the uterus connect. Not required for specifying vulval cell fate. This is Egg-laying defective protein 26 from Caenorhabditis elegans.